The chain runs to 360 residues: Phospho-N-acetylmuramoyl-pentapeptide-transferase (360 aa).

The next 10 membrane-spanning stretches (helical) occupy residues 27–47 (IVSL…MIAW), 73–93 (TMGG…WANL), 94–114 (SNPY…VGFV), 132–152 (WKYF…YAIG), 168–188 (VMPQ…VGTS), 199–219 (GLAI…AWAT), 236–256 (ASEL…FLWF), 263–283 (VFMG…IAVL), 288–308 (FLLV…ILQV), and 338–358 (VIVR…ATLK).

Belongs to the glycosyltransferase 4 family. MraY subfamily. It depends on Mg(2+) as a cofactor.

It localises to the cell inner membrane. The enzyme catalyses UDP-N-acetyl-alpha-D-muramoyl-L-alanyl-gamma-D-glutamyl-meso-2,6-diaminopimeloyl-D-alanyl-D-alanine + di-trans,octa-cis-undecaprenyl phosphate = di-trans,octa-cis-undecaprenyl diphospho-N-acetyl-alpha-D-muramoyl-L-alanyl-D-glutamyl-meso-2,6-diaminopimeloyl-D-alanyl-D-alanine + UMP. It functions in the pathway cell wall biogenesis; peptidoglycan biosynthesis. Functionally, catalyzes the initial step of the lipid cycle reactions in the biosynthesis of the cell wall peptidoglycan: transfers peptidoglycan precursor phospho-MurNAc-pentapeptide from UDP-MurNAc-pentapeptide onto the lipid carrier undecaprenyl phosphate, yielding undecaprenyl-pyrophosphoryl-MurNAc-pentapeptide, known as lipid I. The protein is Phospho-N-acetylmuramoyl-pentapeptide-transferase of Pectobacterium carotovorum subsp. carotovorum (strain PC1).